We begin with the raw amino-acid sequence, 805 residues long: Polycystin-2-like protein 1 (805 aa).

Residues 1–59 (MNAVGSPEGQELQKLGSGAWDNPAYSGPPSPHGTLRVCTISSTGPLQPQPKKPEDEPQE) form a disordered region. Residues 1-103 (MNAVGSPEGQ…ELYIKTTLRE (103 aa)) lie on the Cytoplasmic side of the membrane. Cys-38 carries S-palmitoyl cysteine lipidation. Residues 104 to 124 (LLVYIVFLVDICLLTYGMTSS) traverse the membrane as a helical segment. Residues 125–356 (SAYYYTKVMS…NWDFFIVGCE (232 aa)) lie on the Extracellular side of the membrane. Asn-177 and Asn-207 each carry an N-linked (GlcNAc...) asparagine glycan. Cysteines 210 and 223 form a disulfide. N-linked (GlcNAc...) asparagine glycosylation is present at Asn-241. A helical transmembrane segment spans residues 357–376 (VIFCVFIFYYVVEEILELHI). Ca(2+) is bound by residues Glu-370 and Glu-373. Topologically, residues 377–384 (HRLRYLSS) are cytoplasmic. The chain crosses the membrane as a helical span at residues 385–405 (IWNILDLVVILLSIVAVGFHI). Ca(2+) is bound by residues Asn-387 and Asp-390. Topologically, residues 406-433 (FRTLEVNRLMGKLLQQPNTYADFEFLAF) are extracellular. The helical transmembrane segment at 434 to 454 (WQTQYNNMNAVNLFFAWIKIF) threads the bilayer. The Cytoplasmic portion of the chain corresponds to 455 to 479 (KYISFNKTMTQLSSTLARCAKDILG). Residues 480–499 (FAVMFFIVFFAYAQLGYLLF) traverse the membrane as a helical segment. Residues 500–511 (GTQVENFSTFIK) lie on the Extracellular side of the membrane. A glycan (N-linked (GlcNAc...) asparagine) is linked at Asn-505. An intramembrane region (pore-forming) is located at residues 512–526 (CIFTQFRIILGDFDY). At 527–536 (NAIDNANRIL) the chain is on the extracellular side. Residues 537–557 (GPAYFVTYVFFVFFVLLNMFL) traverse the membrane as a helical segment. The Cytoplasmic portion of the chain corresponds to 558–805 (AIINDTYSEV…RGEIPTLQRS (248 aa)). The 36-residue stretch at 633–668 (HEITELTATFTKFDRDGNRILDEKEQEKMRQDLEEE) folds into the EF-hand domain. Coiled-coil stretches lie at residues 650 to 686 (NRILDEKEQEKMRQDLEEERVALNTEIEKLGRSIVSS) and 700 to 740 (GWVS…MLER). A required for homooligomerization region spans residues 704–763 (GEEFYMLTRRVLQLETVLEGVVSQIDAVGSKLKMLERKGWLAPSPGVKEQAIWKHPQPAP). The interval 759-805 (PQPAPAVTPDPWGVQGGQESEVPYKREEEALEERRLSRGEIPTLQRS) is disordered. The segment covering 780–796 (VPYKREEEALEERRLSR) has biased composition (basic and acidic residues).

Belongs to the polycystin family. In terms of assembly, oligomer. Functional PKD2L1 homotetramer can be formed either through C-terminal trimerization followed by N-terminal dimerization of a fourth subunit with a subunit in the trimer or through dimerization followed by trimerization. Heterotetramer with either PKD1L1, PKD1L3 or PKD1; the heterotetrameric complex contains three PKD1L2 chains plus one chain from another family member. Interacts with PKD1L1, forming a ciliary calcium channel. Interacts with PKD1L3, forming a cation channel that is activated by low extracellular pH. Interacts with PKD1; this heteromeric functional cation channels is opened by hypo-osmotic stimulation. Interacts with RACK1; inhibits the channel activity possibly by impairing localization to the cell membrane. Post-translationally, palmitoylation is important for expression at the cell membrane and for channel activity. In terms of tissue distribution, detected in taste bud cells in fungiform papillae (at protein level). Ubiquitous. Expressed in adult heart, skeletal muscle, brain, spleen, testis, retina and liver. Isoform 4 appears to be expressed only in transformed lymphoblasts.

The protein localises to the cell projection. It localises to the cilium membrane. Its subcellular location is the cell membrane. It is found in the cytoplasmic vesicle. It catalyses the reaction Ca(2+)(in) = Ca(2+)(out). The catalysed reaction is Na(+)(in) = Na(+)(out). The enzyme catalyses K(+)(in) = K(+)(out). It carries out the reaction Mg(2+)(in) = Mg(2+)(out). The non-selective cation channel is gated following an off-response property by acid: gated open after the removal of acid stimulus, but not during acid application. Channel activity is inhibited by phosphatidylinositol-4,5-bisphosphate (PIP2). Non-selective cation channel activity is substantially increased when either the extracellular or intracellular calcium-ion concentration is raised. Regulation of non-selective cation channel activity by external calcium is bimodal, first sensitizing and subsequently inactivating the current. Functionally, homotetrameric, non-selective cation channel that is permeable to sodium, potassium, magnesium and calcium. Also forms functionnal heteromeric channels with PKD1, PKD1L1 and PKD1L3. Pore-forming subunit of a heterotetrameric, non-selective cation channel, formed by PKD1L2 and PKD1L3, that is permeable to sodium, potassium, magnesium and calcium and which may act as a sour taste receptor in gustatory cells; however, its contribution to sour taste perception is unclear in vivo and may be indirect. The homomeric and heteromeric channels formed by PKD1L2 and PKD1L3 are activated by low pH and Ca(2+), but opens only when the extracellular pH rises again and after the removal of acid stimulus. Pore-forming subunit of a calcium-permeant ion channel formed by PKD1L2 and PKD1L1 in primary cilia, where it controls cilium calcium concentration, without affecting cytoplasmic calcium concentration, and regulates sonic hedgehog/SHH signaling and GLI2 transcription. The PKD1L1:PKD2L1 complex channel is mechanosensitive only at high pressures and is highly temperature sensitive. Pore-forming subunit of a calcium-permeant ion channel formed by PKD1L2 and PKD1 that produces a transient increase in intracellular calcium concentration upon hypo-osmotic stimulation (200 mOsm). May play a role in the perception of carbonation taste. May play a role in the sensory perception of water, via a mechanism that activates the channel in response to dilution of salivary bicarbonate and changes in salivary pH. The sequence is that of Polycystin-2-like protein 1 from Homo sapiens (Human).